The primary structure comprises 197 residues: MIIGITGGIASGKSTVVKVIRKAGYQVIDADQVVHDLQEKGGRLYEALREAFGNQILKADGELDRTKLSEMLFSNPDNMATSSAIQNQIIKEELAAKRDHLAQSQAIFFMDIPLLMELGYQDWFDAIWLVYVDAQTQLQRLMARNRLDKGKARQRIASQLPIEEKKPYASLVIDNNGDMETLIKQVQSALLSLANPR.

The 196-residue stretch at Ile-2–Arg-197 folds into the DPCK domain. Ala-10 to Thr-15 contributes to the ATP binding site.

The protein belongs to the CoaE family.

The protein resides in the cytoplasm. It catalyses the reaction 3'-dephospho-CoA + ATP = ADP + CoA + H(+). It participates in cofactor biosynthesis; coenzyme A biosynthesis; CoA from (R)-pantothenate: step 5/5. Functionally, catalyzes the phosphorylation of the 3'-hydroxyl group of dephosphocoenzyme A to form coenzyme A. This is Dephospho-CoA kinase from Streptococcus pyogenes serotype M3 (strain ATCC BAA-595 / MGAS315).